The chain runs to 343 residues: Ribosomal RNA small subunit methyltransferase C (343 aa).

Belongs to the methyltransferase superfamily. RsmC family. As to quaternary structure, monomer.

The protein localises to the cytoplasm. The enzyme catalyses guanosine(1207) in 16S rRNA + S-adenosyl-L-methionine = N(2)-methylguanosine(1207) in 16S rRNA + S-adenosyl-L-homocysteine + H(+). In terms of biological role, specifically methylates the guanine in position 1207 of 16S rRNA in the 30S particle. The protein is Ribosomal RNA small subunit methyltransferase C of Shigella sonnei (strain Ss046).